The following is a 532-amino-acid chain: Pre-piRNA 3'-exonuclease trimmer (532 aa).

Positions 28, 30, 270, and 365 each coordinate Mg(2+). Residues 503 to 523 (AGRFAIWSGSIVTGGLALYLI) traverse the membrane as a helical segment.

It belongs to the CAF1 family. As to quaternary structure, interacts with Papi/Tdrkh; interaction takes place on the mitochondrial surface and recruits PNLDC1/trimmer to PIWI-bound pre-piRNAs. Mg(2+) serves as cofactor.

Its subcellular location is the mitochondrion outer membrane. Functionally, 3'-5' exonuclease that specifically cleaves precursor piRNAs (pre-piRNAs) at their 3' ends. Trims pre-piRNAs to their mature size, a process required for piRNAs maturation and stabilization, and subsequent pre-piRNAs 2'-O-methylation. The piRNA metabolic process mediates the repression of transposable elements during meiosis by forming complexes composed of piRNAs and Piwi proteins and govern the methylation and subsequent repression of transposons. This is Pre-piRNA 3'-exonuclease trimmer from Bombyx mori (Silk moth).